We begin with the raw amino-acid sequence, 427 residues long: MNILKSKELFKEAQNYLVGGVNSPVRAFKAVGTDPIFIQRGKGSRIWDVDGNEYIDYVLSWGPLILGHAHDQVVNAIKQVANYGTSFGAPTELEIEMAKAVVDAVKSVEMVRFVNSGTEATMSAIRLARGYTKRKKIVKFDGCYHGHGDSLLVSAGSGVATLGIPGTPGIPEELANLTIVLPYNDIEAVEEAFKRYGEDIACVIIEPVAGNMGVVAPSKEYHQRLRDITRKYGALLIFDEVMTGFRLAYGGAQELYGIDPDLTTFGKVIGGGLPVGAYGGKREIMEYVAPVGPVYQAGTLSGNPLAMAAGLRQLQLLKELNPYRELDEKGRFLEEGFKQIAQEFSAAIQVNRVGSMITVFFTDIPVKDFATAKTSDTNKFAKFFRCMLEKGIYLPASQFEAFFLSTAHSQKDLEETLEKARECFKIL.

Lys267 is subject to N6-(pyridoxal phosphate)lysine.

This sequence belongs to the class-III pyridoxal-phosphate-dependent aminotransferase family. HemL subfamily. In terms of assembly, homodimer. The cofactor is pyridoxal 5'-phosphate.

The protein localises to the cytoplasm. The enzyme catalyses (S)-4-amino-5-oxopentanoate = 5-aminolevulinate. Its pathway is porphyrin-containing compound metabolism; protoporphyrin-IX biosynthesis; 5-aminolevulinate from L-glutamyl-tRNA(Glu): step 2/2. This is Glutamate-1-semialdehyde 2,1-aminomutase from Sulfurihydrogenibium azorense (strain DSM 15241 / OCM 825 / Az-Fu1).